The primary structure comprises 141 residues: MADDLVEGLTRAGLPGAKASARYVRVSPTKARRVVDLVRGRSVSEALDILRFAPQAASDDVYKVVASAAANAENNHSLDPATLWVGEVYVDEGPTLKRIRPRAQGRAYRIRKRTSHITVVVESREPVSAAGRGAKTTRRAR.

It belongs to the universal ribosomal protein uL22 family. In terms of assembly, part of the 50S ribosomal subunit.

In terms of biological role, this protein binds specifically to 23S rRNA; its binding is stimulated by other ribosomal proteins, e.g. L4, L17, and L20. It is important during the early stages of 50S assembly. It makes multiple contacts with different domains of the 23S rRNA in the assembled 50S subunit and ribosome. Functionally, the globular domain of the protein is located near the polypeptide exit tunnel on the outside of the subunit, while an extended beta-hairpin is found that lines the wall of the exit tunnel in the center of the 70S ribosome. The sequence is that of Large ribosomal subunit protein uL22 from Frankia alni (strain DSM 45986 / CECT 9034 / ACN14a).